A 302-amino-acid polypeptide reads, in one-letter code: Probable alpha-L-glutamate ligase (302 aa).

Positions 104–287 constitute an ATP-grasp domain; it reads LQLLSRKGLG…IAGQIIEYIE (184 aa). Residues K141, 178–179, D187, and 211–213 contribute to the ATP site; these read EY and RSN. Mg(2+)-binding residues include D248, E260, and N262. D248, E260, and N262 together coordinate Mn(2+).

Belongs to the RimK family. Requires Mg(2+) as cofactor. It depends on Mn(2+) as a cofactor.

This is Probable alpha-L-glutamate ligase from Chromohalobacter salexigens (strain ATCC BAA-138 / DSM 3043 / CIP 106854 / NCIMB 13768 / 1H11).